The following is a 354-amino-acid chain: Peptide-N(4)-(N-acetyl-beta-D-glucosaminyl)asparagine amidase F (354 aa).

The first 40 residues, 1 to 40 (MRKLLIFSISAYLMAGIVSCKGVDSATPVTEDRLALNAVN), serve as a signal peptide directing secretion. Cys91 and Cys96 form a disulfide bridge. Active-site residues include Asp100, Glu158, and Glu246. 2 cysteine pairs are disulfide-bonded: Cys244–Cys248 and Cys271–Cys292.

Monomer.

The catalysed reaction is Hydrolysis of an N(4)-(acetyl-beta-D-glucosaminyl)asparagine residue in which the glucosamine residue may be further glycosylated, to yield a (substituted) N-acetyl-beta-D-glucosaminylamine and a peptide containing an aspartate residue.. Its function is as follows. Cleaves an entire glycan from a glycoprotein. Requires that the glycosylated asparagine moiety (reaction 1) be substituted on its amino (R1) and carboxyl (R2) terminus with a polypeptide chain. This chain is Peptide-N(4)-(N-acetyl-beta-D-glucosaminyl)asparagine amidase F (ngl), found in Elizabethkingia miricola (Chryseobacterium miricola).